Reading from the N-terminus, the 264-residue chain is ATP synthase subunit a (264 aa).

Helical transmembrane passes span 27–47 (VHLD…FVFS), 87–107 (VGPL…IDLI), 131–151 (DISG…FYTI), 172–192 (LLIP…PVSL), 196–216 (LFGN…MYMA), and 230–250 (LAWA…FMML).

It belongs to the ATPase A chain family. As to quaternary structure, F-type ATPases have 2 components, CF(1) - the catalytic core - and CF(0) - the membrane proton channel. CF(1) has five subunits: alpha(3), beta(3), gamma(1), delta(1), epsilon(1). CF(0) has three main subunits: a(1), b(2) and c(9-12). The alpha and beta chains form an alternating ring which encloses part of the gamma chain. CF(1) is attached to CF(0) by a central stalk formed by the gamma and epsilon chains, while a peripheral stalk is formed by the delta and b chains.

It localises to the cell inner membrane. Its function is as follows. Key component of the proton channel; it plays a direct role in the translocation of protons across the membrane. This Pasteurella multocida (strain Pm70) protein is ATP synthase subunit a.